The sequence spans 114 residues: Large ribosomal subunit protein bL21 (114 aa).

It belongs to the bacterial ribosomal protein bL21 family. In terms of assembly, part of the 50S ribosomal subunit. Contacts protein L20.

Its function is as follows. This protein binds to 23S rRNA in the presence of protein L20. The protein is Large ribosomal subunit protein bL21 of Protochlamydia amoebophila (strain UWE25).